A 717-amino-acid polypeptide reads, in one-letter code: Fatty acid oxidation complex subunit alpha (717 aa).

Positions Met-1–Ala-190 are enoyl-CoA hydratase/isomerase. Asp-298 serves as a coordination point for substrate. The tract at residues His-313–Gly-717 is 3-hydroxyacyl-CoA dehydrogenase. NAD(+)-binding positions include Met-326, Asp-345, Val-402 to Glu-404, Lys-409, and Ser-431. His-452 (for 3-hydroxyacyl-CoA dehydrogenase activity) is an active-site residue. Asn-455 contacts NAD(+). Asn-502 is a binding site for substrate.

It in the N-terminal section; belongs to the enoyl-CoA hydratase/isomerase family. This sequence in the C-terminal section; belongs to the 3-hydroxyacyl-CoA dehydrogenase family. Heterotetramer of two alpha chains (FadB) and two beta chains (FadA).

The enzyme catalyses a (3S)-3-hydroxyacyl-CoA + NAD(+) = a 3-oxoacyl-CoA + NADH + H(+). The catalysed reaction is a (3S)-3-hydroxyacyl-CoA = a (2E)-enoyl-CoA + H2O. It carries out the reaction a 4-saturated-(3S)-3-hydroxyacyl-CoA = a (3E)-enoyl-CoA + H2O. It catalyses the reaction (3S)-3-hydroxybutanoyl-CoA = (3R)-3-hydroxybutanoyl-CoA. The enzyme catalyses a (3Z)-enoyl-CoA = a 4-saturated (2E)-enoyl-CoA. The catalysed reaction is a (3E)-enoyl-CoA = a 4-saturated (2E)-enoyl-CoA. The protein operates within lipid metabolism; fatty acid beta-oxidation. Its function is as follows. Involved in the aerobic and anaerobic degradation of long-chain fatty acids via beta-oxidation cycle. Catalyzes the formation of 3-oxoacyl-CoA from enoyl-CoA via L-3-hydroxyacyl-CoA. It can also use D-3-hydroxyacyl-CoA and cis-3-enoyl-CoA as substrate. This is Fatty acid oxidation complex subunit alpha from Acinetobacter baumannii (strain SDF).